The sequence spans 298 residues: Small ribosomal subunit protein uS3 (298 aa).

The region spanning 39–107 (VREYLKAKLK…PVAVNIEEVR (69 aa)) is the KH type-2 domain. The tract at residues 214–298 (PAAVEARTDE…PAAAADGKGE (85 aa)) is disordered. A compositionally biased stretch (basic and acidic residues) spans 219-245 (ARTDEERRPRGPRRDDRGARPGADRPA). Residues 277–298 (KPAVQRVRKVAAPAAAADGKGE) are compositionally biased toward low complexity.

It belongs to the universal ribosomal protein uS3 family. In terms of assembly, part of the 30S ribosomal subunit. Forms a tight complex with proteins S10 and S14.

Binds the lower part of the 30S subunit head. Binds mRNA in the 70S ribosome, positioning it for translation. This Albidiferax ferrireducens (strain ATCC BAA-621 / DSM 15236 / T118) (Rhodoferax ferrireducens) protein is Small ribosomal subunit protein uS3.